A 509-amino-acid chain; its full sequence is Scavenger receptor class B member 1 (509 aa).

The Cytoplasmic portion of the chain corresponds to 1-11 (MGVSSRARWVA). A helical membrane pass occupies residues 12-32 (LGLGVLGLLCAALGVIMILMV). Residues 33–440 (PSLIKQQVLK…YTQLVLMPQV (408 aa)) are Extracellular-facing. 10 N-linked (GlcNAc...) asparagine glycosylation sites follow: Asn-102, Asn-108, Asn-116, Asn-173, Asn-212, Asn-227, Asn-255, Asn-310, Asn-330, and Asn-383. Residues Cys-251 and Cys-384 are joined by a disulfide bond. A helical membrane pass occupies residues 441-461 (LHYAQYVLLGLGGLLLLVPII). Residues 462–509 (YQLRSQEKCFLFWSGSKKGSQDKEAMQAYSESLMSPAAKGTVLQEAKL) are Cytoplasmic-facing.

This sequence belongs to the CD36 family. In terms of assembly, the C-terminal region binds to PDZK1. N-glycosylated. In terms of processing, the six cysteines of the extracellular domain are all involved in intramolecular disulfide bonds.

Its subcellular location is the cell membrane. It is found in the membrane. The protein localises to the caveola. Its function is as follows. Receptor for different ligands such as phospholipids, cholesterol ester, lipoproteins, phosphatidylserine and apoptotic cells. Receptor for HDL, mediating selective uptake of cholesteryl ether and HDL-dependent cholesterol efflux. Also facilitates the flux of free and esterified cholesterol between the cell surface and apoB-containing lipoproteins and modified lipoproteins, although less efficiently than HDL. May be involved in the phagocytosis of apoptotic cells, via its phosphatidylserine binding activity. The sequence is that of Scavenger receptor class B member 1 (Scarb1) from Rattus norvegicus (Rat).